The primary structure comprises 510 residues: Nectin-4 (510 aa).

The signal sequence occupies residues methionine 1–alanine 31. The region spanning glycine 32–arginine 144 is the Ig-like V-type domain. The Extracellular portion of the chain corresponds to glycine 32 to serine 349. Intrachain disulfides connect cysteine 52–cysteine 127, cysteine 171–cysteine 223, and cysteine 270–cysteine 315. Ig-like C2-type domains lie at proline 148–threonine 237 and alanine 248–aspartate 331. N-linked (GlcNAc...) asparagine glycosylation occurs at asparagine 281. Residues valine 350–leucine 370 traverse the membrane as a helical segment. Over methionine 371–valine 510 the chain is Cytoplasmic. The segment covering arginine 399–proline 412 has biased composition (basic and acidic residues). Disordered regions lie at residues arginine 399–threonine 447 and glutamine 457–glutamate 476.

Belongs to the nectin family. As to quaternary structure, self-associates. Interacts via its Ig-like V-type domain with NECTIN1 Ig-like V-type domain. Interacts via its C-terminus with AFDN. In terms of assembly, (Microbial infection) Interacts (via N-terminus) with measles virus hemagglutinin protein. The soluble form is produced by proteolytic cleavage at the cell surface (shedding), probably by ADAM17/TACE. Predominantly expressed in placenta. Not detected in normal breast epithelium but expressed in breast carcinoma.

The protein localises to the cell membrane. Its subcellular location is the cell junction. The protein resides in the adherens junction. It is found in the secreted. Seems to be involved in cell adhesion through trans-homophilic and -heterophilic interactions, the latter including specifically interactions with NECTIN1. Does not act as receptor for alpha-herpesvirus entry into cells. Functionally, (Microbial infection) Acts as a receptor for measles virus. The sequence is that of Nectin-4 from Homo sapiens (Human).